Here is a 424-residue protein sequence, read N- to C-terminus: UDP-N-acetylglucosamine 1-carboxyvinyltransferase (424 aa).

Phosphoenolpyruvate is bound at residue K22–N23. Residue R95 coordinates UDP-N-acetyl-alpha-D-glucosamine. Residue C119 is the Proton donor of the active site. At C119 the chain carries 2-(S-cysteinyl)pyruvic acid O-phosphothioketal. UDP-N-acetyl-alpha-D-glucosamine contacts are provided by residues R124–Q128, D311, and I333.

This sequence belongs to the EPSP synthase family. MurA subfamily.

It localises to the cytoplasm. It catalyses the reaction phosphoenolpyruvate + UDP-N-acetyl-alpha-D-glucosamine = UDP-N-acetyl-3-O-(1-carboxyvinyl)-alpha-D-glucosamine + phosphate. Its pathway is cell wall biogenesis; peptidoglycan biosynthesis. In terms of biological role, cell wall formation. Adds enolpyruvyl to UDP-N-acetylglucosamine. The protein is UDP-N-acetylglucosamine 1-carboxyvinyltransferase of Polaromonas naphthalenivorans (strain CJ2).